Reading from the N-terminus, the 351-residue chain is sn-glycerol-3-phosphate import ATP-binding protein UgpC (351 aa).

Positions I4–I235 constitute an ABC transporter domain. G37–S44 contacts ATP.

The protein belongs to the ABC transporter superfamily. sn-glycerol-3-phosphate importer (TC 3.A.1.1.3) family. As to quaternary structure, the complex is composed of two ATP-binding proteins (UgpC), two transmembrane proteins (UgpA and UgpE) and a solute-binding protein (UgpB).

It localises to the cell inner membrane. The enzyme catalyses sn-glycerol 3-phosphate(out) + ATP + H2O = sn-glycerol 3-phosphate(in) + ADP + phosphate + H(+). Functionally, part of the ABC transporter complex UgpBAEC involved in sn-glycerol-3-phosphate (G3P) import. Responsible for energy coupling to the transport system. The protein is sn-glycerol-3-phosphate import ATP-binding protein UgpC of Brucella abortus (strain 2308).